The chain runs to 597 residues: Dictomallein-3 (597 aa).

A signal peptide spans 1 to 19; it reads MKLILILIFLFSCILFINC. One can recognise a Peptidase M66 domain in the interval 148 to 409; that stretch reads PDVGQDYTLK…QNYFKNSIYY (262 aa). Zn(2+) is bound at residue His-301. Glu-302 is an active-site residue. His-305 and His-311 together coordinate Zn(2+).

It belongs to the dictomallein family. Zn(2+) is required as a cofactor.

Its subcellular location is the secreted. This is Dictomallein-3 (dtmlC) from Dictyostelium discoideum (Social amoeba).